The chain runs to 538 residues: Metal transporter Nramp5 (538 aa).

The next 12 helical transmembrane spans lie at 44–64 (FLAHVGPGFMVSLAYLDPGNL), 77–97 (ELLWVILIGLIFALIIQSLAA), 118–138 (FVKIFLWLLAELAVIAADIPE), 140–160 (IGTAFAFNILFHIPVWVGVLI), 181–201 (FLISMLVFVMAACFFGELSIV), 227–247 (IALLGALVMPHNLFLHSALVL), 264–284 (FFLYESGFALFVALLINIAVV), 324–346 (SAIVYGVALLASGQSSTITGTYA), 365–385 (NLMTRTIAIAPSLIVSIIGGS), 391–411 (LIIIASMILSFELPFALIPLL), 427–447 (IYIIVFSWFLGLLIIGINMYF), and 467–487 (VLVGAAVFPFMLVYIVAVVYL). Positions 518-538 (AVDDDEPLPYRDDLADIPLPR) are disordered.

Belongs to the NRAMP (TC 2.A.55) family.

Its subcellular location is the membrane. Functionally, probable metal transporter. The chain is Metal transporter Nramp5 (NRAMP5) from Oryza sativa subsp. japonica (Rice).